The primary structure comprises 764 residues: Hemocyte protein-glutamine gamma-glutamyltransferase (764 aa).

Active-site residues include C343, H402, and D425. Positions 465, 467, 522, and 527 each coordinate Ca(2+).

Belongs to the transglutaminase superfamily. Transglutaminase family. Requires Ca(2+) as cofactor. As to expression, mainly expressed in hemocytes, hepatopancreas, and gastric tissues. On the other hand nothing was detected in the heart, intestine and muscle.

It is found in the membrane. The catalysed reaction is L-glutaminyl-[protein] + L-lysyl-[protein] = [protein]-L-lysyl-N(6)-5-L-glutamyl-[protein] + NH4(+). In terms of biological role, catalyzes the cross-linking of proteins and the conjugation of polyamines to proteins. The protein is Hemocyte protein-glutamine gamma-glutamyltransferase of Tachypleus tridentatus (Japanese horseshoe crab).